A 261-amino-acid polypeptide reads, in one-letter code: Methylmalonyl-CoA decarboxylase (261 aa).

Substrate-binding positions include 64–68, Gly-110, Thr-132, and Lys-253; that span reads AGHDI.

Belongs to the enoyl-CoA hydratase/isomerase family. As to quaternary structure, dimer of homotrimers.

It carries out the reaction (R)-methylmalonyl-CoA + H(+) = propanoyl-CoA + CO2. Catalyzes the decarboxylation of (R)-methylmalonyl-CoA to propionyl-CoA. Could be part of a pathway that converts succinate to propanoate. The protein is Methylmalonyl-CoA decarboxylase (scpB) of Escherichia coli (strain K12).